The following is a 348-amino-acid chain: 2-heptyl-4(1H)-quinolone synthase subunit PqsC (348 aa).

Cysteine 129 functions as the Acyl-thioester intermediate in the catalytic mechanism. Residue histidine 269 is part of the active site.

This sequence belongs to the thiolase-like superfamily. FabH family. As to quaternary structure, forms a tight complex with PqsB.

Its subcellular location is the cytoplasm. The enzyme catalyses (2-aminobenzoyl)acetate + octanoyl-CoA + H(+) = 2-heptyl-4(1H)-quinolone + CO2 + CoA + H2O. Its activity is regulated as follows. Folding of PqsC and binding of octanoate are promoted by PqsB. Binding of the octanoyl group probably increases the binding affinity of the complex for 2-ABA. Activity of the complex is inhibited by 2-aminoacetophenone (2-AA). In terms of biological role, required for the biosynthesis of the quorum-sensing signaling molecules 2-heptyl-4(1H)-quinolone (HHQ) and 2-heptyl-3-hydroxy-4(1H)-quinolone (Pseudomonas quinolone signal or PQS), which are important for biofilm formation and virulence. The PqsC/PqsB complex catalyzes the condensation of 2-aminobenzoylacetate (2-ABA) and octanoyl-CoA to form HHQ. First, PqsC acquires an octanoyl group from octanoyl-CoA and forms an octanoyl-PqsC intermediate. Then, together with PqsB, it catalyzes the coupling of 2-ABA with the octanoate group, leading to decarboxylation and dehydration, and resulting in closure of the quinoline ring. This is 2-heptyl-4(1H)-quinolone synthase subunit PqsC from Pseudomonas aeruginosa (strain ATCC 15692 / DSM 22644 / CIP 104116 / JCM 14847 / LMG 12228 / 1C / PRS 101 / PAO1).